The chain runs to 109 residues: Urease subunit gamma (109 aa).

It belongs to the urease gamma subunit family. Heterotrimer of UreA (gamma), UreB (beta) and UreC (alpha) subunits. Three heterotrimers associate to form the active enzyme.

It is found in the cytoplasm. The enzyme catalyses urea + 2 H2O + H(+) = hydrogencarbonate + 2 NH4(+). The protein operates within nitrogen metabolism; urea degradation; CO(2) and NH(3) from urea (urease route): step 1/1. This is Urease subunit gamma from Natronomonas pharaonis (strain ATCC 35678 / DSM 2160 / CIP 103997 / JCM 8858 / NBRC 14720 / NCIMB 2260 / Gabara) (Halobacterium pharaonis).